Consider the following 32-residue polypeptide: Turripeptide XIV-18 (32 aa).

Isoleucine amide is present on I30.

Contains 2 disulfide bonds. Expressed by the venom duct.

The protein resides in the secreted. This chain is Turripeptide XIV-18, found in Gemmula speciosa (Splendid gem-turris).